We begin with the raw amino-acid sequence, 898 residues long: MEAAEKEEISVEDEAVDKTIFKDCGKIAFYRRQKQQLTKTTTYQALLGSVDTEQDSTRFQIISEATKIPLVAEVYGIEKDIFRLKINEETPLKPRLVCSGDTGSLILTNRKGDLKCHVSANPFKIDLLSKNEAVISINSLGQLYFEHLQVPHKQRATKGNGQNTPAATSQENQEDLGLWEEKFGKFVDVKANGPSSVGLDFSLHGFEHLYGIPQHAESHQLKNTRDGDAYRLYNLDVYGYQVHDKMGIYGSVPYLLAHKQGRTVGIFWLNASETLVEINTEPAVEYTLTQMGPAAAKPKVRCRTDVHWMSESGIIDVFLLTGPTPADVFKQYSYITGTQAMPPLFSLGYHQCRWNYEDEQDVKAVDAGFDEHDIPYDVMWLDIEHTEDKKYFTWDKKRFANPKRMQELLRSKKRKLVVISDPHIKVDPDYTVYAQAKEQGFFVKNPEGGDFEGVCWPGLSSYLDFTNPKVREWYSSLFAFPVYQGSTDILFLWNDMNEPSVFRGPELTMHKSAVHYGDWEHRELHNIYGFYQQMATAEGLIQRSKGKERPFVLSRSFFAGSQKYGAVWTGDNKAEWSYLKISIPMLLTLSVSGISFCGADVGGFIGNPEAELLVRWYQAGAYQPFFRGHATMNTKRREPWLFGEEYTQLIREAIRQRYALLPYLYSLFYHTHVSSQPVMRPLWVEYPDDLETFAVEDEYMLGSALLVHPVTDPQTATIDVFLPGSDEVWYDSKTFAYWKGGCTVKIPVTLDTIPVFQRGGSVVPVKTTVGTSTGWMADSPYELRVALSTQGSAVGELYLDDGHSFQYLHQNQFLYRKFLFCSSVLTNRCANEKGHYPSKCIVEQILVLGLKKKPSSVTTHLSDGRAQPAAFTYCAETSALRLEKLSLRIGEDWEVRVG.

The disordered stretch occupies residues 154–173; it reads QRATKGNGQNTPAATSQENQ. Residues 157–171 are compositionally biased toward polar residues; the sequence is TKGNGQNTPAATSQE. D495 serves as the catalytic Nucleophile. E498 is a catalytic residue. Catalysis depends on D571, which acts as the Proton donor.

This sequence belongs to the glycosyl hydrolase 31 family.

The enzyme catalyses Hydrolysis of terminal, non-reducing (1-&gt;4)-linked alpha-D-glucose residues with release of alpha-D-glucose.. Functionally, has alpha-glucosidase activity. The sequence is that of Neutral alpha-glucosidase C (Ganc) from Mus musculus (Mouse).